Reading from the N-terminus, the 503-residue chain is Maturase K (503 aa).

The protein belongs to the intron maturase 2 family. MatK subfamily.

The protein localises to the plastid. The protein resides in the chloroplast. Usually encoded in the trnK tRNA gene intron. Probably assists in splicing its own and other chloroplast group II introns. The protein is Maturase K of Rosa canina (Dog rose).